The chain runs to 300 residues: Acetylglutamate kinase (300 aa).

Substrate-binding positions include 68-69 (GG), R90, and N195.

The protein belongs to the acetylglutamate kinase family. ArgB subfamily.

It is found in the cytoplasm. The enzyme catalyses N-acetyl-L-glutamate + ATP = N-acetyl-L-glutamyl 5-phosphate + ADP. It participates in amino-acid biosynthesis; L-arginine biosynthesis; N(2)-acetyl-L-ornithine from L-glutamate: step 2/4. In terms of biological role, catalyzes the ATP-dependent phosphorylation of N-acetyl-L-glutamate. The sequence is that of Acetylglutamate kinase from Halorhodospira halophila (strain DSM 244 / SL1) (Ectothiorhodospira halophila (strain DSM 244 / SL1)).